We begin with the raw amino-acid sequence, 294 residues long: UDP-3-O-acyl-N-acetylglucosamine deacetylase (294 aa).

Residues H75, H232, and D236 each coordinate Zn(2+). H259 acts as the Proton donor in catalysis.

It belongs to the LpxC family. The cofactor is Zn(2+).

It catalyses the reaction a UDP-3-O-[(3R)-3-hydroxyacyl]-N-acetyl-alpha-D-glucosamine + H2O = a UDP-3-O-[(3R)-3-hydroxyacyl]-alpha-D-glucosamine + acetate. The protein operates within glycolipid biosynthesis; lipid IV(A) biosynthesis; lipid IV(A) from (3R)-3-hydroxytetradecanoyl-[acyl-carrier-protein] and UDP-N-acetyl-alpha-D-glucosamine: step 2/6. Functionally, catalyzes the hydrolysis of UDP-3-O-myristoyl-N-acetylglucosamine to form UDP-3-O-myristoylglucosamine and acetate, the committed step in lipid A biosynthesis. The polypeptide is UDP-3-O-acyl-N-acetylglucosamine deacetylase (Campylobacter hominis (strain ATCC BAA-381 / DSM 21671 / CCUG 45161 / LMG 19568 / NCTC 13146 / CH001A)).